We begin with the raw amino-acid sequence, 130 residues long: Ribonuclease P protein component 2 (130 aa).

It belongs to the eukaryotic/archaeal RNase P protein component 2 family. As to quaternary structure, consists of a catalytic RNA component and at least 5 protein subunits.

It localises to the cytoplasm. The enzyme catalyses Endonucleolytic cleavage of RNA, removing 5'-extranucleotides from tRNA precursor.. In terms of biological role, part of ribonuclease P, a protein complex that generates mature tRNA molecules by cleaving their 5'-ends. This chain is Ribonuclease P protein component 2, found in Methanococcus maripaludis (strain DSM 14266 / JCM 13030 / NBRC 101832 / S2 / LL).